Reading from the N-terminus, the 388-residue chain is Dual-specificity RNA methyltransferase RlmN (388 aa).

The active-site Proton acceptor is the E109. The Radical SAM core domain maps to 115–354 (EDDRATLCVS…TIVRKTRGDD (240 aa)). Cysteines 122 and 359 form a disulfide. [4Fe-4S] cluster is bound by residues C129, C133, and C136. S-adenosyl-L-methionine contacts are provided by residues 183-184 (GE), S215, 237-239 (SLH), and N316. The active-site S-methylcysteine intermediate is C359.

This sequence belongs to the radical SAM superfamily. RlmN family. Requires [4Fe-4S] cluster as cofactor.

It is found in the cytoplasm. The catalysed reaction is adenosine(2503) in 23S rRNA + 2 reduced [2Fe-2S]-[ferredoxin] + 2 S-adenosyl-L-methionine = 2-methyladenosine(2503) in 23S rRNA + 5'-deoxyadenosine + L-methionine + 2 oxidized [2Fe-2S]-[ferredoxin] + S-adenosyl-L-homocysteine. It catalyses the reaction adenosine(37) in tRNA + 2 reduced [2Fe-2S]-[ferredoxin] + 2 S-adenosyl-L-methionine = 2-methyladenosine(37) in tRNA + 5'-deoxyadenosine + L-methionine + 2 oxidized [2Fe-2S]-[ferredoxin] + S-adenosyl-L-homocysteine. Specifically methylates position 2 of adenine 2503 in 23S rRNA and position 2 of adenine 37 in tRNAs. m2A2503 modification seems to play a crucial role in the proofreading step occurring at the peptidyl transferase center and thus would serve to optimize ribosomal fidelity. The protein is Dual-specificity RNA methyltransferase RlmN of Salmonella arizonae (strain ATCC BAA-731 / CDC346-86 / RSK2980).